The chain runs to 130 residues: Small ribosomal subunit protein uS9 (130 aa).

A disordered region spans residues 99-130 (KSAGMLTRDPRMKERKKPGLKKARKASQFSKR). Residues 111–130 (KERKKPGLKKARKASQFSKR) are compositionally biased toward basic residues.

It belongs to the universal ribosomal protein uS9 family.

The polypeptide is Small ribosomal subunit protein uS9 (Latilactobacillus sakei subsp. sakei (strain 23K) (Lactobacillus sakei subsp. sakei)).